Consider the following 121-residue polypeptide: DLWQFNKMIKKEVGKLPFPFYGAYGCYCGWGGRGEKPKDGTDRCCFVHDCCYKKLTGCPKWDDRYSYSWKDITIVCGEDLPCEEICECDRAAAVCFYENLGTYNKKYMKHLKPCKKADYPC.

7 disulfide bridges follow: C26–C114, C28–C45, C44–C95, C50–C121, C51–C88, C58–C82, and C76–C86. Ca(2+) contacts are provided by Y27, G29, and G31. The active site involves H48. D49 lines the Ca(2+) pocket. D89 is an active-site residue.

It depends on Ca(2+) as a cofactor. Expressed by the venom gland.

It is found in the secreted. The catalysed reaction is a 1,2-diacyl-sn-glycero-3-phosphocholine + H2O = a 1-acyl-sn-glycero-3-phosphocholine + a fatty acid + H(+). Inhibited by magnesium, cadmium and manganese ions. Also inhibited by crotapotin. In terms of biological role, snake venom phospholipase A2 (PLA2) that shows enzymatic activity in the presence of a synthetic substrate. In vitro, blocks the neuromuscular transmission in young chick biventer cervicis preparations. In mice, induces myonecrosis and a systemic interleukin-6 response upon intramuscular injection. Also induces edema and exerts a strong pro-inflammatory effect. PLA2 catalyzes the calcium-dependent hydrolysis of the 2-acyl groups in 3-sn-phosphoglycerides. The polypeptide is Basic phospholipase A2 BmTX-I (Bothrops moojeni (Lance-headed viper)).